We begin with the raw amino-acid sequence, 238 residues long: 7-cyano-7-deazaguanine synthase (238 aa).

Position 12-22 (12-22) interacts with ATP; that stretch reads FSGGQDSTTCL. Zn(2+)-binding residues include Cys191, Cys200, Cys203, and Cys206.

This sequence belongs to the QueC family. Zn(2+) is required as a cofactor.

It carries out the reaction 7-carboxy-7-deazaguanine + NH4(+) + ATP = 7-cyano-7-deazaguanine + ADP + phosphate + H2O + H(+). It functions in the pathway purine metabolism; 7-cyano-7-deazaguanine biosynthesis. Catalyzes the ATP-dependent conversion of 7-carboxy-7-deazaguanine (CDG) to 7-cyano-7-deazaguanine (preQ(0)). In Shewanella oneidensis (strain ATCC 700550 / JCM 31522 / CIP 106686 / LMG 19005 / NCIMB 14063 / MR-1), this protein is 7-cyano-7-deazaguanine synthase.